The following is a 394-amino-acid chain: MKKIVLAYSGGLDTSVILKWLQENYNCEVVVFTADIGQEDDMSVIQKKAAALNVKEIFIEDLKEEFVRDFVFPMFRANTIYEGYYLLGTSIARPLIAKRQIEIAHLTGADAVAHGATGKGNDQVRFEFGYYCCDPNIKVIAPWRQWELTSRHSLIEYARKNNINVPLDKVNEPPYSIDANLLHISYEGKSLEDPYVEPDYTMLSRSLTPELASSIPEYIEITFEQGDPIAINDISLSPANLLHQLNKIGGKHGIGIVDIVENRYIGIKSRGIYETPGGTILLHAHRAIESITLDRESAHLKDEIMPKYAKLIYNGYWWTTERKMLQSLIDKSQEKVNGTVRIKLYKGSVIVVGRKSNNSLYSYNLASFDSESQGYDHKDAEGFIKVNSLRLKKS.

ATP-binding positions include 7 to 15 and alanine 34; that span reads AYSGGLDTS. L-citrulline-binding residues include tyrosine 85 and serine 90. Position 115 (glycine 115) interacts with ATP. Threonine 117, asparagine 121, and aspartate 122 together coordinate L-aspartate. An L-citrulline-binding site is contributed by asparagine 121. Residues arginine 125, serine 176, serine 185, glutamate 261, and tyrosine 273 each contribute to the L-citrulline site.

The protein belongs to the argininosuccinate synthase family. Type 1 subfamily. Homotetramer.

The protein localises to the cytoplasm. It carries out the reaction L-citrulline + L-aspartate + ATP = 2-(N(omega)-L-arginino)succinate + AMP + diphosphate + H(+). It participates in amino-acid biosynthesis; L-arginine biosynthesis; L-arginine from L-ornithine and carbamoyl phosphate: step 2/3. This chain is Argininosuccinate synthase, found in Ehrlichia ruminantium (strain Welgevonden).